Reading from the N-terminus, the 535-residue chain is Palmdelphin (535 aa).

The stretch at 1 to 105 forms a coiled coil; sequence MEEAELLKER…KEELQVSTKE (105 aa). Residues 423-450 are disordered; sequence VVIDDDDDDDDDEEADKKGEENTKESVS. The span at 424-436 shows a compositional bias: acidic residues; sequence VIDDDDDDDDDEE. A compositionally biased stretch (basic and acidic residues) spans 437 to 446; the sequence is ADKKGEENTK.

The protein belongs to the paralemmin family.

Its subcellular location is the cytoplasm. It localises to the cell projection. It is found in the dendrite. The protein resides in the dendritic spine. The protein is Palmdelphin (palmd) of Xenopus laevis (African clawed frog).